The primary structure comprises 132 residues: Small ribosomal subunit protein uS8 (132 aa).

It belongs to the universal ribosomal protein uS8 family. As to quaternary structure, part of the 30S ribosomal subunit. Contacts proteins S5 and S12.

One of the primary rRNA binding proteins, it binds directly to 16S rRNA central domain where it helps coordinate assembly of the platform of the 30S subunit. The protein is Small ribosomal subunit protein uS8 of Treponema pallidum (strain Nichols).